Reading from the N-terminus, the 367-residue chain is tRNA(Ile)-lysidine synthase, chloroplastic (367 aa).

Residue 64 to 69 participates in ATP binding; that stretch reads SGGQDS.

The protein belongs to the tRNA(Ile)-lysidine synthase family.

The protein localises to the plastid. It localises to the chloroplast. The catalysed reaction is cytidine(34) in tRNA(Ile2) + L-lysine + ATP = lysidine(34) in tRNA(Ile2) + AMP + diphosphate + H(+). Ligates lysine onto the cytidine present at position 34 of the AUA codon-specific tRNA(Ile) that contains the anticodon CAU, in an ATP-dependent manner. Cytidine is converted to lysidine, thus changing the amino acid specificity of the tRNA from methionine to isoleucine. This chain is tRNA(Ile)-lysidine synthase, chloroplastic, found in Nephroselmis olivacea (Green alga).